Here is a 364-residue protein sequence, read N- to C-terminus: Putative zinc metalloprotease all3971 (364 aa).

His-17 serves as a coordination point for Zn(2+). The active site involves Glu-18. His-21 serves as a coordination point for Zn(2+). Helical transmembrane passes span 92 to 114 (AIVI…LAQV), 281 to 303 (LFFF…LPAL), and 329 to 346 (VMQT…FLIV). The 86-residue stretch at 103 to 188 (LIFAYMLLLA…KSIQLTVARG (86 aa)) folds into the PDZ domain.

Belongs to the peptidase M50B family. Zn(2+) serves as cofactor.

It localises to the cell inner membrane. This chain is Putative zinc metalloprotease all3971, found in Nostoc sp. (strain PCC 7120 / SAG 25.82 / UTEX 2576).